A 969-amino-acid chain; its full sequence is Rab3 GTPase-activating protein catalytic subunit (969 aa).

Residues 532–549 show a composition bias toward basic and acidic residues; it reads DDGKKSSSSDGARDRSRG. The interval 532-613 is disordered; sequence DDGKKSSSSD…PEGRLQPHGT (82 aa). Residues 550–572 are compositionally biased toward low complexity; that stretch reads APEGAGPEGAGPAEAAGKSWDSW. The span at 573 to 589 shows a compositional bias: acidic residues; it reads SDSEDEFFECVSDTEEM. Over residues 590–608 the composition is skewed to basic and acidic residues; it reads KEDKEEAENRSRSKPEGRL.

The protein belongs to the Rab3-GAP catalytic subunit family. In terms of assembly, the Rab3 GTPase-activating complex is a heterodimer composed of rab3gap1 and rab3gap2. The Rab3 GTPase-activating complex interacts with DMXL2. Interacts with LMAN1.

Its subcellular location is the cytoplasm. The protein localises to the endoplasmic reticulum. The protein resides in the golgi apparatus. It is found in the cis-Golgi network. Catalytic subunit of the Rab3 GTPase-activating (Rab3GAP) complex composed of rab3gap1 and rab3gap2, which has GTPase-activating protein (GAP) activity towards various Rab3 subfamily members (RAB3A, RAB3B, RAB3C and RAB3D), RAB5A and RAB43, and guanine nucleotide exchange factor (GEF) activity towards RAB18. As part of the Rab3GAP complex, acts as a GAP for Rab3 proteins by converting active RAB3-GTP to the inactive form RAB3-GDP. Rab3 proteins are involved in regulated exocytosis of neurotransmitters and hormones. The Rab3GAP complex, acts as a GEF for RAB18 by promoting the conversion of inactive RAB18-GDP to the active form RAB18-GTP. Recruits and stabilizes RAB18 at the cis-Golgi membrane where RAB18 is most likely activated. Also involved in RAB18 recruitment at the endoplasmic reticulum (ER) membrane where it maintains proper ER structure. Required for normal eye and brain development. May participate in neurodevelopmental processes such as proliferation, migration and differentiation before synapse formation, and non-synaptic vesicular release of neurotransmitters. The chain is Rab3 GTPase-activating protein catalytic subunit (rab3gap1) from Danio rerio (Zebrafish).